A 431-amino-acid polypeptide reads, in one-letter code: Glutamate--tRNA ligase 1 (431 aa).

A 'HIGH' region motif is present at residues 6-16 (PSPTGDMHIGN). A 'KMSKS' region motif is present at residues 235–239 (KMSKR). An ATP-binding site is contributed by Lys238.

The protein belongs to the class-I aminoacyl-tRNA synthetase family. Glutamate--tRNA ligase type 1 subfamily. In terms of assembly, monomer.

It is found in the cytoplasm. The enzyme catalyses tRNA(Glu) + L-glutamate + ATP = L-glutamyl-tRNA(Glu) + AMP + diphosphate. In terms of biological role, catalyzes the attachment of glutamate to tRNA(Glu) in a two-step reaction: glutamate is first activated by ATP to form Glu-AMP and then transferred to the acceptor end of tRNA(Glu). The polypeptide is Glutamate--tRNA ligase 1 (Campylobacter jejuni subsp. jejuni serotype O:2 (strain ATCC 700819 / NCTC 11168)).